We begin with the raw amino-acid sequence, 305 residues long: Protoheme IX farnesyltransferase 1 (305 aa).

A run of 9 helical transmembrane segments spans residues 30–50, 59–79, 108–128, 129–149, 154–176, 180–202, 232–252, 253–273, and 284–304; these read IGIV…AFQF, LDVI…SGAM, FVLT…FAAS, FAAG…YSMW, HVSN…FAAV, LGPG…FYAL, LFWI…GIGF, LTLA…GFTA, and FIYS…FAVF.

The protein belongs to the UbiA prenyltransferase family. Protoheme IX farnesyltransferase subfamily. As to quaternary structure, interacts with CtaA.

The protein resides in the cell membrane. The enzyme catalyses heme b + (2E,6E)-farnesyl diphosphate + H2O = Fe(II)-heme o + diphosphate. It participates in porphyrin-containing compound metabolism; heme O biosynthesis; heme O from protoheme: step 1/1. Converts heme B (protoheme IX) to heme O by substitution of the vinyl group on carbon 2 of heme B porphyrin ring with a hydroxyethyl farnesyl side group. This chain is Protoheme IX farnesyltransferase 1, found in Lysinibacillus sphaericus (strain C3-41).